The sequence spans 113 residues: UPF0122 protein MCAP_0480 (113 aa).

The protein belongs to the UPF0122 family.

Functionally, might take part in the signal recognition particle (SRP) pathway. This is inferred from the conservation of its genetic proximity to ftsY/ffh. May be a regulatory protein. The chain is UPF0122 protein MCAP_0480 from Mycoplasma capricolum subsp. capricolum (strain California kid / ATCC 27343 / NCTC 10154).